Reading from the N-terminus, the 517-residue chain is MSDAETNAWDAIHRVEKRTLLELFDADSERVSKLSHRLAWGVESPGGQEAGGILFDWSKTHLTDELLDGFEALADAMDFAGAREKLLSGAKINVTEGRAAEHTAQRGTGAEASVEEAVALMGRMKALVDAIHGGAMGEVKHLIHVGIGGSALGPKLALDALTRDLALVDVHVVSNIDGVALEQAFAACDPATTLIAIASKTFTTIETMTNATSALHWLKTNGVDDPHGRVVALTANPEAAVEFGVDETRVLPFMESVGGRYSLWSSIGFPVALGAGWDEFEGMLAGAQAMDEHFASADGRANLPLLAAFADLYYTRVRGCQARACFAYDERLGLLPDYLQQLEMESNGKRVKADGTPVDGPTAPITWGGVGTDAQHAVFQLLHQGTHLVPVDFIASIAPGDDLDPAHHRILLTNCFAQGAALMAGGNMAADEKDPARVFPGDRPSATMLCDDLDAVTLGALIAFHEHRTFANAVLMGINPFDQFGVELGKKMAKDIESGGAEFDASTQALVGAAGLA.

The active-site Proton donor is the E345. Residues H376 and K490 contribute to the active site.

Belongs to the GPI family.

The protein resides in the cytoplasm. The enzyme catalyses alpha-D-glucose 6-phosphate = beta-D-fructose 6-phosphate. Its pathway is carbohydrate biosynthesis; gluconeogenesis. It participates in carbohydrate degradation; glycolysis; D-glyceraldehyde 3-phosphate and glycerone phosphate from D-glucose: step 2/4. Catalyzes the reversible isomerization of glucose-6-phosphate to fructose-6-phosphate. The protein is Glucose-6-phosphate isomerase of Erythrobacter litoralis (strain HTCC2594).